Here is a 484-residue protein sequence, read N- to C-terminus: Ribosome biogenesis protein YTM1 (484 aa).

The tract at residues 13-95 (VKVTFTTTEA…ESNLTLQYVR (83 aa)) is ubiquitin-like (UBL) domain. WD repeat units lie at residues 122–161 (SPSG…IATS), 168–206 (GHTA…HFSG), 216–255 (GHTG…APEA), 288–328 (IHSA…VVTT), 330–373 (STSH…ATTS), 379–419 (GHAN…PATQ), and 448–484 (GEGC…VVAE).

The protein belongs to the WD repeat WDR12/YTM1 family. Component of the NOP7 complex, composed of ERB1, NOP7 and YTM1. The complex is held together by ERB1, which interacts with NOP7 via its N-terminal domain and with YTM1 via a high-affinity interaction between the seven-bladed beta-propeller domains of the 2 proteins. The NOP7 complex associates with the 66S pre-ribosome. Interacts (via UBL domain) with MDN1 (via VWFA/MIDAS domain).

The protein resides in the nucleus. It is found in the nucleolus. Its subcellular location is the nucleoplasm. Its function is as follows. Component of the NOP7 complex, which is required for maturation of the 25S and 5.8S ribosomal RNAs and formation of the 60S ribosome. In Chaetomium globosum (strain ATCC 6205 / CBS 148.51 / DSM 1962 / NBRC 6347 / NRRL 1970) (Soil fungus), this protein is Ribosome biogenesis protein YTM1.